Here is a 215-residue protein sequence, read N- to C-terminus: Histidine biosynthesis bifunctional protein HisIE (215 aa).

Residues 1-126 (MSHSDLPLAN…GHKSPPPADM (126 aa)) are phosphoribosyl-AMP cyclohydrolase. Positions 127–215 (LTELARVIGD…VYRKLGDRRR (89 aa)) are phosphoribosyl-ATP pyrophosphohydrolase.

This sequence in the N-terminal section; belongs to the PRA-CH family. The protein in the C-terminal section; belongs to the PRA-PH family.

The protein localises to the cytoplasm. The catalysed reaction is 1-(5-phospho-beta-D-ribosyl)-ATP + H2O = 1-(5-phospho-beta-D-ribosyl)-5'-AMP + diphosphate + H(+). It catalyses the reaction 1-(5-phospho-beta-D-ribosyl)-5'-AMP + H2O = 1-(5-phospho-beta-D-ribosyl)-5-[(5-phospho-beta-D-ribosylamino)methylideneamino]imidazole-4-carboxamide. Its pathway is amino-acid biosynthesis; L-histidine biosynthesis; L-histidine from 5-phospho-alpha-D-ribose 1-diphosphate: step 2/9. It functions in the pathway amino-acid biosynthesis; L-histidine biosynthesis; L-histidine from 5-phospho-alpha-D-ribose 1-diphosphate: step 3/9. In Synechocystis sp. (strain ATCC 27184 / PCC 6803 / Kazusa), this protein is Histidine biosynthesis bifunctional protein HisIE (hisI).